Consider the following 438-residue polypeptide: Glutamyl-tRNA reductase (438 aa).

Substrate contacts are provided by residues 55 to 58, serine 118, 123 to 125, and glutamine 129; these read TCNR and ETQ. The active-site Nucleophile is the cysteine 56. 198 to 203 is an NADP(+) binding site; sequence GAGDMI.

It belongs to the glutamyl-tRNA reductase family. Homodimer.

The catalysed reaction is (S)-4-amino-5-oxopentanoate + tRNA(Glu) + NADP(+) = L-glutamyl-tRNA(Glu) + NADPH + H(+). The protein operates within porphyrin-containing compound metabolism; protoporphyrin-IX biosynthesis; 5-aminolevulinate from L-glutamyl-tRNA(Glu): step 1/2. Functionally, catalyzes the NADPH-dependent reduction of glutamyl-tRNA(Glu) to glutamate 1-semialdehyde (GSA). The protein is Glutamyl-tRNA reductase of Polynucleobacter asymbioticus (strain DSM 18221 / CIP 109841 / QLW-P1DMWA-1) (Polynucleobacter necessarius subsp. asymbioticus).